Consider the following 325-residue polypeptide: Beta-ketoacyl-[acyl-carrier-protein] synthase III (325 aa).

Residues Cys-112 and His-250 contribute to the active site. The ACP-binding stretch occupies residues 251 to 255; it reads QANSR. The active site involves Asn-280.

This sequence belongs to the thiolase-like superfamily. FabH family. Homodimer.

Its subcellular location is the cytoplasm. The catalysed reaction is malonyl-[ACP] + acetyl-CoA + H(+) = 3-oxobutanoyl-[ACP] + CO2 + CoA. It functions in the pathway lipid metabolism; fatty acid biosynthesis. Functionally, catalyzes the condensation reaction of fatty acid synthesis by the addition to an acyl acceptor of two carbons from malonyl-ACP. Catalyzes the first condensation reaction which initiates fatty acid synthesis and may therefore play a role in governing the total rate of fatty acid production. Possesses both acetoacetyl-ACP synthase and acetyl transacylase activities. Its substrate specificity determines the biosynthesis of branched-chain and/or straight-chain of fatty acids. The sequence is that of Beta-ketoacyl-[acyl-carrier-protein] synthase III from Lactococcus lactis subsp. cremoris (strain SK11).